A 520-amino-acid polypeptide reads, in one-letter code: Succinyl-CoA:3-ketoacid coenzyme A transferase 2A, mitochondrial (520 aa).

The transit peptide at 1–39 (MAALRLLAWAFSRRVSAHRPQPTLPHHLIRHYPTTRCGK) directs the protein to the mitochondrion. A disordered region spans residues 280 to 299 (ERLTTRDSPPAPGSKDQDPK). The active-site 5-glutamyl coenzyme A thioester intermediate is glutamate 342.

It belongs to the 3-oxoacid CoA-transferase family. As to quaternary structure, homodimer. As to expression, expressed in flagella of epididymal sperm.

It localises to the mitochondrion. It catalyses the reaction a 3-oxo acid + succinyl-CoA = a 3-oxoacyl-CoA + succinate. It functions in the pathway ketone metabolism; succinyl-CoA degradation; acetoacetyl-CoA from succinyl-CoA: step 1/1. Its function is as follows. Key enzyme for ketone body catabolism. Transfers the CoA moiety from succinate to acetoacetate. Formation of the enzyme-CoA intermediate proceeds via an unstable anhydride species formed between the carboxylate groups of the enzyme and substrate. Probably play and important roles in the energy metabolism of spermatozoa. The sequence is that of Succinyl-CoA:3-ketoacid coenzyme A transferase 2A, mitochondrial (Oxct2a) from Rattus norvegicus (Rat).